We begin with the raw amino-acid sequence, 356 residues long: Phosphate acyltransferase (356 aa).

This sequence belongs to the PlsX family. As to quaternary structure, homodimer. Probably interacts with PlsY.

Its subcellular location is the cytoplasm. It catalyses the reaction a fatty acyl-[ACP] + phosphate = an acyl phosphate + holo-[ACP]. The protein operates within lipid metabolism; phospholipid metabolism. Functionally, catalyzes the reversible formation of acyl-phosphate (acyl-PO(4)) from acyl-[acyl-carrier-protein] (acyl-ACP). This enzyme utilizes acyl-ACP as fatty acyl donor, but not acyl-CoA. The chain is Phosphate acyltransferase from Bartonella bacilliformis (strain ATCC 35685 / KC583 / Herrer 020/F12,63).